The primary structure comprises 113 residues: Iron-sulfur cluster insertion protein ErpA (113 aa).

Iron-sulfur cluster-binding residues include Cys41, Cys105, and Cys107.

It belongs to the HesB/IscA family. In terms of assembly, homodimer. It depends on iron-sulfur cluster as a cofactor.

In terms of biological role, required for insertion of 4Fe-4S clusters for at least IspG. This Actinobacillus pleuropneumoniae serotype 7 (strain AP76) protein is Iron-sulfur cluster insertion protein ErpA.